A 169-amino-acid chain; its full sequence is Putative phosphoesterase SSP1770 (169 aa).

The active-site Proton donor is H34. 2 short sequence motifs (HXTX) span residues 34–37 (HITI) and 115–118 (HFTI). The active-site Proton acceptor is H115.

Belongs to the 2H phosphoesterase superfamily. YjcG family.

The sequence is that of Putative phosphoesterase SSP1770 from Staphylococcus saprophyticus subsp. saprophyticus (strain ATCC 15305 / DSM 20229 / NCIMB 8711 / NCTC 7292 / S-41).